We begin with the raw amino-acid sequence, 340 residues long: Phosphate acyltransferase (340 aa).

Belongs to the PlsX family. In terms of assembly, homodimer. Probably interacts with PlsY.

Its subcellular location is the cytoplasm. It carries out the reaction a fatty acyl-[ACP] + phosphate = an acyl phosphate + holo-[ACP]. Its pathway is lipid metabolism; phospholipid metabolism. Its function is as follows. Catalyzes the reversible formation of acyl-phosphate (acyl-PO(4)) from acyl-[acyl-carrier-protein] (acyl-ACP). This enzyme utilizes acyl-ACP as fatty acyl donor, but not acyl-CoA. This chain is Phosphate acyltransferase, found in Helicobacter pylori (strain HPAG1).